The chain runs to 217 residues: Thymidylate kinase (217 aa).

ATP is bound at residue 11-18; the sequence is GLEGAGKS.

The protein belongs to the thymidylate kinase family.

It catalyses the reaction dTMP + ATP = dTDP + ADP. Its function is as follows. Phosphorylation of dTMP to form dTDP in both de novo and salvage pathways of dTTP synthesis. This Alkalilimnicola ehrlichii (strain ATCC BAA-1101 / DSM 17681 / MLHE-1) protein is Thymidylate kinase.